A 190-amino-acid polypeptide reads, in one-letter code: dCTP deaminase (190 aa).

113–118 (KSTYAR) is a dCTP binding site. Residue Glu139 is the Proton donor/acceptor of the active site. DCTP-binding residues include Gln158, Tyr172, Lys181, and Gln182.

This sequence belongs to the dCTP deaminase family. In terms of assembly, homotrimer.

The catalysed reaction is dCTP + H2O + H(+) = dUTP + NH4(+). It functions in the pathway pyrimidine metabolism; dUMP biosynthesis; dUMP from dCTP (dUTP route): step 1/2. Functionally, catalyzes the deamination of dCTP to dUTP. The chain is dCTP deaminase from Chlamydia abortus (strain DSM 27085 / S26/3) (Chlamydophila abortus).